Here is a 760-residue protein sequence, read N- to C-terminus: Transferrin receptor protein 1 (760 aa).

Over 1–67 (MMDQARSAFS…KPKRCSGSIC (67 aa)) the chain is Cytoplasmic. Residues 1–67 (MMDQARSAFS…KPKRCSGSIC (67 aa)) form a mediates interaction with SH3BP4 region. Phosphoserine is present on residues S10 and S19. Phosphotyrosine is present on Y20. An Endocytosis signal motif is present at residues 20-23 (YTRF). The residue at position 21 (T21) is a Phosphothreonine. At S24 the chain carries Phosphoserine. The Stop-transfer sequence signature appears at 58–61 (KPKR). S-palmitoyl cysteine attachment occurs at residues C62 and C67. A helical; Signal-anchor for type II membrane protein membrane pass occupies residues 68–88 (YGTIAVIVFFLIGFMIGYLGY). Residues 89–760 (CKGVEPKTEC…GDVWDIDNEF (672 aa)) are Extracellular-facing. An O-linked (GalNAc...) threonine glycan is attached at T104. Positions 223–313 (SKAATVTGKL…GTGDPYTPGF (91 aa)) constitute a PA domain. N251 and N317 each carry an N-linked (GlcNAc...) asparagine glycan. Residues 569–760 (TMDTYKELIE…GDVWDIDNEF (192 aa)) form a ligand-binding region. The short motif at 646–648 (RGD) is the Cell attachment site; required for binding to transferrin element. N-linked (GlcNAc...) asparagine glycosylation is present at N727.

The protein belongs to the peptidase M28 family. M28B subfamily. As to quaternary structure, homodimer; disulfide-linked. Binds one transferrin or HFE molecule per subunit. Binds the HLA class II histocompatibility antigen, DR1. Interacts with SH3BP3. Interacts with STEAP3; facilitates TFRC endocytosis in erythroid precursor cells. Interacts with GRM2. In terms of assembly, (Microbial infection) Interacts with Guanarito, Junin and Machupo arenavirus glycoprotein complex. (Microbial infection) Interacts with rabies virus protein G. As to quaternary structure, (Microbial infection) Interacts with SARS-CoV-2 spike protein S. In terms of processing, stearoylated by ZDHHC6 which inhibits TFRC-mediated activation of the JNK pathway and promotes mitochondrial fragmentation. Stearoylation does not affect iron uptake. Post-translationally, N- and O-glycosylated, phosphorylated and palmitoylated. The serum form is only glycosylated. Proteolytically cleaved on Arg-100 to produce the soluble serum form (sTfR). In terms of processing, palmitoylated on both Cys-62 and Cys-67. Cys-62 seems to be the major site of palmitoylation.

The protein resides in the cell membrane. It is found in the melanosome. Its subcellular location is the secreted. Its function is as follows. Cellular uptake of iron occurs via receptor-mediated endocytosis of ligand-occupied transferrin receptor into specialized endosomes. Endosomal acidification leads to iron release. The apotransferrin-receptor complex is then recycled to the cell surface with a return to neutral pH and the concomitant loss of affinity of apotransferrin for its receptor. Transferrin receptor is necessary for development of erythrocytes and the nervous system. A second ligand, the hereditary hemochromatosis protein HFE, competes for binding with transferrin for an overlapping C-terminal binding site. Positively regulates T and B cell proliferation through iron uptake. Acts as a lipid sensor that regulates mitochondrial fusion by regulating activation of the JNK pathway. When dietary levels of stearate (C18:0) are low, promotes activation of the JNK pathway, resulting in HUWE1-mediated ubiquitination and subsequent degradation of the mitofusin MFN2 and inhibition of mitochondrial fusion. When dietary levels of stearate (C18:0) are high, TFRC stearoylation inhibits activation of the JNK pathway and thus degradation of the mitofusin MFN2. Mediates uptake of NICOL1 into fibroblasts where it may regulate extracellular matrix production. In terms of biological role, (Microbial infection) Acts as a receptor for new-world arenaviruses: Guanarito, Junin and Machupo virus. (Microbial infection) Acts as a host entry factor for rabies virus that hijacks the endocytosis of TFRC to enter cells. Functionally, (Microbial infection) Acts as a host entry factor for SARS-CoV, MERS-CoV and SARS-CoV-2 viruses that hijack the endocytosis of TFRC to enter cells. This is Transferrin receptor protein 1 (TFRC) from Homo sapiens (Human).